The sequence spans 286 residues: Cytotoxin (286 aa).

A propeptide spanning residues 267-286 (TFYNYASLVPDLETRVRSAE) is cleaved from the precursor.

It belongs to the aerolysin family.

It is found in the secreted. Cytotoxin is thought to form hydrophilic pores in cell membranes. This chain is Cytotoxin (ctx), found in Pseudomonas aeruginosa.